A 266-amino-acid polypeptide reads, in one-letter code: tRNA pseudouridine synthase A (266 aa).

D55 acts as the Nucleophile in catalysis. Residue Y110 participates in substrate binding.

Belongs to the tRNA pseudouridine synthase TruA family.

The enzyme catalyses uridine(38/39/40) in tRNA = pseudouridine(38/39/40) in tRNA. Functionally, formation of pseudouridine at positions 38, 39 and 40 in the anticodon stem and loop of transfer RNAs. This is tRNA pseudouridine synthase A from Thermococcus sibiricus (strain DSM 12597 / MM 739).